Here is a 253-residue protein sequence, read N- to C-terminus: uncharacterized protein (253 aa).

This is an uncharacterized protein from Caenorhabditis elegans.